The primary structure comprises 341 residues: Retinol dehydrogenase 10-B (341 aa).

Residues 3-23 (IVLEFFLVTFRVLWAFVLAAA) form a helical; Signal-anchor membrane-spanning segment. NADP(+) is bound at residue 40-64 (LITGAGSGLGRLFALEFARRRAQLV). Ser197 contributes to the substrate binding site. The active-site Proton acceptor is the Tyr210.

This sequence belongs to the short-chain dehydrogenases/reductases (SDR) family.

The protein localises to the microsome membrane. It is found in the endoplasmic reticulum membrane. The catalysed reaction is all-trans-retinol + NADP(+) = all-trans-retinal + NADPH + H(+). The protein operates within cofactor metabolism; retinol metabolism. Retinol dehydrogenase with a clear preference for NADP. Converts all-trans-retinol to all-trans-retinal. Has no detectable activity towards 11-cis-retinol, 9-cis-retinol and 13-cis-retinol. This chain is Retinol dehydrogenase 10-B (rdh10-b), found in Xenopus laevis (African clawed frog).